Consider the following 195-residue polypeptide: 3-isopropylmalate dehydratase small subunit (195 aa).

The protein belongs to the LeuD family. LeuD type 1 subfamily. In terms of assembly, heterodimer of LeuC and LeuD.

It carries out the reaction (2R,3S)-3-isopropylmalate = (2S)-2-isopropylmalate. Its pathway is amino-acid biosynthesis; L-leucine biosynthesis; L-leucine from 3-methyl-2-oxobutanoate: step 2/4. In terms of biological role, catalyzes the isomerization between 2-isopropylmalate and 3-isopropylmalate, via the formation of 2-isopropylmaleate. The chain is 3-isopropylmalate dehydratase small subunit from Parafrankia sp. (strain EAN1pec).